A 140-amino-acid polypeptide reads, in one-letter code: 3-hydroxyacyl-[acyl-carrier-protein] dehydratase FabZ (140 aa).

His-47 is an active-site residue.

This sequence belongs to the thioester dehydratase family. FabZ subfamily.

Its subcellular location is the cytoplasm. It carries out the reaction a (3R)-hydroxyacyl-[ACP] = a (2E)-enoyl-[ACP] + H2O. Functionally, involved in unsaturated fatty acids biosynthesis. Catalyzes the dehydration of short chain beta-hydroxyacyl-ACPs and long chain saturated and unsaturated beta-hydroxyacyl-ACPs. This is 3-hydroxyacyl-[acyl-carrier-protein] dehydratase FabZ from Streptococcus pneumoniae (strain 70585).